A 90-amino-acid chain; its full sequence is Chromosomal protein MC1c (90 aa).

Functionally, protects DNA against thermal denaturation and modulates transcription. The protein is Chromosomal protein MC1c of Methanothrix soehngenii (Methanosaeta concilii).